Here is a 91-residue protein sequence, read N- to C-terminus: Small ribosomal subunit protein bS16 (91 aa).

The protein belongs to the bacterial ribosomal protein bS16 family.

The polypeptide is Small ribosomal subunit protein bS16 (Lacticaseibacillus casei (strain BL23) (Lactobacillus casei)).